The primary structure comprises 574 residues: K(+)/H(+) antiporter NhaP2 (574 aa).

The next 13 membrane-spanning stretches (helical) occupy residues 6-26 (INSFFLIGALLTAVSVLLSPM), 34-54 (ILLIFLAVGILAGEDGPGGIL), 58-78 (YSTAYLVSNFALAIILLDGGM), 87-107 (VALWPALSLATFGVAITTSIT), 109-129 (VMAAWLFDLHWLQGLLVGAIV), 173-193 (IAILANVGAELSASFMLISFI), 196-216 (FGLGVLLGLGGGWLLWKLVNV), 219-239 (LAEGLYSILVLSGGLMIYATS), 242-262 (LGGSGILSIYLVGLFLGNKPT), 271-291 (VLDGMTWVSQIGMFLVLGLLL), 299-319 (IWLPGLALAFGMILFARPLAV), 335-355 (WFISWVGLRGAVPIILAVFPM), and 359-379 (LPGAQLYFNLAFFVVIVSLLV). Positions 405-486 (SGVEIYPKSE…LEALSNLFSQ (82 aa)) constitute an RCK C-terminal domain.

Belongs to the monovalent cation:proton antiporter 1 (CPA1) transporter (TC 2.A.36) family. NhaP2 subfamily.

The protein localises to the cell inner membrane. The enzyme catalyses K(+)(in) + H(+)(out) = K(+)(out) + H(+)(in). Functionally, k(+)/H(+) antiporter that extrudes potassium in exchange for external protons and maintains the internal concentration of potassium under toxic levels. This is K(+)/H(+) antiporter NhaP2 from Shewanella oneidensis (strain ATCC 700550 / JCM 31522 / CIP 106686 / LMG 19005 / NCIMB 14063 / MR-1).